Here is a 210-residue protein sequence, read N- to C-terminus: Large ribosomal subunit protein uL3 (210 aa).

It belongs to the universal ribosomal protein uL3 family. As to quaternary structure, part of the 50S ribosomal subunit. Forms a cluster with proteins L14 and L19.

In terms of biological role, one of the primary rRNA binding proteins, it binds directly near the 3'-end of the 23S rRNA, where it nucleates assembly of the 50S subunit. This Geobacter metallireducens (strain ATCC 53774 / DSM 7210 / GS-15) protein is Large ribosomal subunit protein uL3.